The sequence spans 1378 residues: DNA-directed RNA polymerase subunit beta (1378 aa).

This sequence belongs to the RNA polymerase beta chain family. In terms of assembly, the RNAP catalytic core consists of 2 alpha, 1 beta, 1 beta' and 1 omega subunit. When a sigma factor is associated with the core the holoenzyme is formed, which can initiate transcription.

It carries out the reaction RNA(n) + a ribonucleoside 5'-triphosphate = RNA(n+1) + diphosphate. Functionally, DNA-dependent RNA polymerase catalyzes the transcription of DNA into RNA using the four ribonucleoside triphosphates as substrates. In Mesorhizobium japonicum (strain LMG 29417 / CECT 9101 / MAFF 303099) (Mesorhizobium loti (strain MAFF 303099)), this protein is DNA-directed RNA polymerase subunit beta.